The primary structure comprises 358 residues: Pyruvate dehydrogenase E1 component subunit alpha (358 aa).

Heterodimer of an alpha and a beta chain. It depends on thiamine diphosphate as a cofactor.

The catalysed reaction is N(6)-[(R)-lipoyl]-L-lysyl-[protein] + pyruvate + H(+) = N(6)-[(R)-S(8)-acetyldihydrolipoyl]-L-lysyl-[protein] + CO2. In terms of biological role, the pyruvate dehydrogenase complex catalyzes the overall conversion of pyruvate to acetyl-CoA and CO(2). It contains multiple copies of three enzymatic components: pyruvate dehydrogenase (E1), dihydrolipoamide acetyltransferase (E2) and lipoamide dehydrogenase (E3). This Mycoplasma pneumoniae (strain ATCC 29342 / M129 / Subtype 1) (Mycoplasmoides pneumoniae) protein is Pyruvate dehydrogenase E1 component subunit alpha (pdhA).